Consider the following 193-residue polypeptide: Ribonuclease HII (193 aa).

Residues 15 to 193 (YIVAGVDEAG…SYHRKSFKFC (179 aa)) form the RNase H type-2 domain. A divalent metal cation-binding residues include Asp21, Glu22, and Asp112.

The protein belongs to the RNase HII family. It depends on Mn(2+) as a cofactor. Mg(2+) is required as a cofactor.

It is found in the cytoplasm. It catalyses the reaction Endonucleolytic cleavage to 5'-phosphomonoester.. Its function is as follows. Endonuclease that specifically degrades the RNA of RNA-DNA hybrids. The protein is Ribonuclease HII of Rickettsia typhi (strain ATCC VR-144 / Wilmington).